Reading from the N-terminus, the 76-residue chain is Secreted RxLR effector protein 31 (76 aa).

The signal sequence occupies residues 1–24 (MRHCACLFHLFLIGFLCNVYFSAC). The RxLR-dEER signature appears at 49 to 64 (RILRANDSEFLLTEER). N-linked (GlcNAc...) asparagine glycosylation occurs at asparagine 54.

It belongs to the RxLR effector family.

The protein localises to the secreted. It is found in the host nucleus. Its subcellular location is the host cytoplasm. Secreted effector that dos not suppress the host cell death induced by cell death-inducing proteins. The chain is Secreted RxLR effector protein 31 from Plasmopara viticola (Downy mildew of grapevine).